The following is a 200-amino-acid chain: GTP cyclohydrolase-2 (200 aa).

49–53 (RVHSE) contacts GTP. Zn(2+) is bound by residues Cys-54, Cys-65, and Cys-67. GTP-binding positions include Gln-70, 92–94 (EGR), and Thr-114. Asp-126 acts as the Proton acceptor in catalysis. The active-site Nucleophile is the Arg-128. 2 residues coordinate GTP: Thr-149 and Lys-154.

This sequence belongs to the GTP cyclohydrolase II family. Homodimer. Requires Zn(2+) as cofactor.

The catalysed reaction is GTP + 4 H2O = 2,5-diamino-6-hydroxy-4-(5-phosphoribosylamino)-pyrimidine + formate + 2 phosphate + 3 H(+). It participates in cofactor biosynthesis; riboflavin biosynthesis; 5-amino-6-(D-ribitylamino)uracil from GTP: step 1/4. Its function is as follows. Catalyzes the conversion of GTP to 2,5-diamino-6-ribosylamino-4(3H)-pyrimidinone 5'-phosphate (DARP), formate and pyrophosphate. The sequence is that of GTP cyclohydrolase-2 from Klebsiella pneumoniae subsp. pneumoniae (strain ATCC 700721 / MGH 78578).